The primary structure comprises 310 residues: uncharacterized protein (310 aa).

Residues 1 to 70 (MAGNSQRRGA…ARGRTDETET (70 aa)) are disordered. Positions 49 to 62 (AAKRAKAQQRRPAR) are enriched in basic residues. S-adenosyl-L-methionine contacts are provided by Gly262, Val282, and Leu291.

Belongs to the class IV-like SAM-binding methyltransferase superfamily. RNA methyltransferase TrmH family.

This is an uncharacterized protein from Mycobacterium marinum (strain ATCC BAA-535 / M).